The following is a 122-amino-acid chain: Large ribosomal subunit protein uL14 (122 aa).

It belongs to the universal ribosomal protein uL14 family. In terms of assembly, part of the 50S ribosomal subunit. Forms a cluster with proteins L3 and L19. In the 70S ribosome, L14 and L19 interact and together make contacts with the 16S rRNA in bridges B5 and B8.

Functionally, binds to 23S rRNA. Forms part of two intersubunit bridges in the 70S ribosome. The sequence is that of Large ribosomal subunit protein uL14 from Clavibacter michiganensis subsp. michiganensis (strain NCPPB 382).